The primary structure comprises 305 residues: Glycine--tRNA ligase alpha subunit (305 aa).

The protein belongs to the class-II aminoacyl-tRNA synthetase family. Tetramer of two alpha and two beta subunits.

It is found in the cytoplasm. The enzyme catalyses tRNA(Gly) + glycine + ATP = glycyl-tRNA(Gly) + AMP + diphosphate. This Streptococcus pyogenes serotype M18 (strain MGAS8232) protein is Glycine--tRNA ligase alpha subunit.